A 580-amino-acid chain; its full sequence is Proline--tRNA ligase (580 aa).

This sequence belongs to the class-II aminoacyl-tRNA synthetase family. ProS type 1 subfamily. Homodimer.

The protein resides in the cytoplasm. The catalysed reaction is tRNA(Pro) + L-proline + ATP = L-prolyl-tRNA(Pro) + AMP + diphosphate. Catalyzes the attachment of proline to tRNA(Pro) in a two-step reaction: proline is first activated by ATP to form Pro-AMP and then transferred to the acceptor end of tRNA(Pro). As ProRS can inadvertently accommodate and process non-cognate amino acids such as alanine and cysteine, to avoid such errors it has two additional distinct editing activities against alanine. One activity is designated as 'pretransfer' editing and involves the tRNA(Pro)-independent hydrolysis of activated Ala-AMP. The other activity is designated 'posttransfer' editing and involves deacylation of mischarged Ala-tRNA(Pro). The misacylated Cys-tRNA(Pro) is not edited by ProRS. The sequence is that of Proline--tRNA ligase from Mycobacteroides abscessus (strain ATCC 19977 / DSM 44196 / CCUG 20993 / CIP 104536 / JCM 13569 / NCTC 13031 / TMC 1543 / L948) (Mycobacterium abscessus).